We begin with the raw amino-acid sequence, 87 residues long: Acyl-CoA-binding protein (87 aa).

At S2 the chain carries N-acetylserine. One can recognise an ACB domain in the interval 2-87 (SQAEFEKAAE…VEELKKKYGI (86 aa)). The residue at position 8 (K8) is an N6-acetyllysine; alternate. At K8 the chain carries N6-succinyllysine; alternate. Residue K14 participates in an acyl-CoA binding. An N6-succinyllysine modification is found at K17. At K19 the chain carries N6-acetyllysine. Y29 bears the Phosphotyrosine mark. An acyl-CoA-binding positions include 29–33 (YSHYK), K51, K55, and Y74. N6-acetyllysine is present on K51. At K55 the chain carries N6-acetyllysine; alternate. Position 55 is an N6-succinyllysine; alternate (K55). N6-(2-hydroxyisobutyryl)lysine; alternate is present on K55. K55 bears the N6-malonyllysine; alternate mark. The residue at position 77 (K77) is an N6-acetyllysine; alternate. An N6-succinyllysine; alternate modification is found at K77.

This sequence belongs to the ACBP family. Monomer.

It is found in the endoplasmic reticulum. The protein resides in the golgi apparatus. Functionally, binds medium- and long-chain acyl-CoA esters with very high affinity and may function as an intracellular carrier of acyl-CoA esters. It is also able to displace diazepam from the benzodiazepine (BZD) recognition site located on the GABA type A receptor. It is therefore possible that this protein also acts as a neuropeptide to modulate the action of the GABA receptor. DBI(32-86) has antibacterial properties. The polypeptide is Acyl-CoA-binding protein (DBI) (Sus scrofa (Pig)).